Here is a 479-residue protein sequence, read N- to C-terminus: Polyadenylate-binding protein-interacting protein 1 (479 aa).

The disordered stretch occupies residues 1 to 114 (MSDGFDRAPG…PQQNSESAMA (114 aa)). S2 bears the N-acetylalanine mark. Gly residues predominate over residues 11 to 33 (AGRGRSRGLGRGGGGPEGGGFPN). R21 carries the omega-N-methylarginine modification. Over residues 45–69 (PPQPKAPGFLQPPPLRQPRTTPPPG) the composition is skewed to pro residues. Polar residues predominate over residues 98–111 (PSSQDKIPQQNSES). A PABPC1-interacting motif-2 (PAM2) region spans residues 116–143 (PQVVVAPVLMSKLSVNAPEFYPSGYSSS). The PAIP1 middle domain (PAIP1M) stretch occupies residues 157 to 375 (TLSEYVQDFL…LLKLVELRSS (219 aa)). In terms of domain architecture, MIF4G spans 159–376 (SEYVQDFLNH…LKLVELRSSN (218 aa)). Residues 435 to 455 (DYEENGTDLSGAGDPYLDDID) form a disordered region. The PABPC1-interacting motif-1 (PAM1) stretch occupies residues 440-479 (GTDLSGAGDPYLDDIDDEMDPEIEEAYEKFCLESERKRKQ).

Interacts with the RRM1-RRM2 and C-terminus regions of PABPC1 in a 1:1 stoichiometry. Interacts with EIF4A. As to quaternary structure, (Microbial infection) Interacts (via PAIP1M) with human SARS coronaviruses SARS-COV and SARS-COV-2 NSP3 protein (via SARS-unique domain); the interaction increases binding affinity with PABPC1.

The protein resides in the cytoplasm. Acts as a coactivator in the regulation of translation initiation of poly(A)-containing mRNAs. Its stimulatory activity on translation is mediated via its action on PABPC1. Competes with PAIP2 for binding to PABPC1. Its association with EIF4A and PABPC1 may potentiate contacts between mRNA termini. May also be involved in translationally coupled mRNA turnover. Implicated with other RNA-binding proteins in the cytoplasmic deadenylation/translational and decay interplay of the FOS mRNA mediated by the major coding-region determinant of instability (mCRD) domain. In terms of biological role, (Microbial infection) Upon interaction with SARS coronavirus SARS-CoV NSP3 protein, plays an important role in viral protein synthesis. In Homo sapiens (Human), this protein is Polyadenylate-binding protein-interacting protein 1.